The chain runs to 446 residues: Exodeoxyribonuclease 7 large subunit (446 aa).

It belongs to the XseA family. In terms of assembly, heterooligomer composed of large and small subunits.

The protein resides in the cytoplasm. It catalyses the reaction Exonucleolytic cleavage in either 5'- to 3'- or 3'- to 5'-direction to yield nucleoside 5'-phosphates.. Its function is as follows. Bidirectionally degrades single-stranded DNA into large acid-insoluble oligonucleotides, which are then degraded further into small acid-soluble oligonucleotides. The chain is Exodeoxyribonuclease 7 large subunit from Streptococcus agalactiae serotype Ia (strain ATCC 27591 / A909 / CDC SS700).